The sequence spans 1183 residues: DNA-directed RNA polymerase subunit beta (1183 aa).

Residues 1153 to 1162 (DMQDNEEEDV) are compositionally biased toward acidic residues. Residues 1153–1183 (DMQDNEEEDVVERKVDLQQKDAPQSQKEVTD) form a disordered region. Over residues 1173-1183 (DAPQSQKEVTD) the composition is skewed to polar residues.

It belongs to the RNA polymerase beta chain family. The RNAP catalytic core consists of 2 alpha, 1 beta, 1 beta' and 1 omega subunit. When a sigma factor is associated with the core the holoenzyme is formed, which can initiate transcription.

The catalysed reaction is RNA(n) + a ribonucleoside 5'-triphosphate = RNA(n+1) + diphosphate. Functionally, DNA-dependent RNA polymerase catalyzes the transcription of DNA into RNA using the four ribonucleoside triphosphates as substrates. This chain is DNA-directed RNA polymerase subunit beta, found in Staphylococcus saprophyticus subsp. saprophyticus (strain ATCC 15305 / DSM 20229 / NCIMB 8711 / NCTC 7292 / S-41).